The sequence spans 367 residues: Aspartate beta-hydroxylase domain-containing protein 1 (367 aa).

The segment at 1–27 is disordered; it reads MWRGSSAGGSQGAAMEGTGGELGGQGN. Residues 1 to 49 are Cytoplasmic-facing; sequence MWRGSSAGGSQGAAMEGTGGELGGQGNWGLEDAPGLLARASLPIMPAWP. Residues 50–72 form a helical membrane-spanning segment; it reads LPLASSALTLLLGALTSLFLWYC. Topologically, residues 73–367 are lumenal; sequence YRLGSQDMQA…ALDFVFAPDP (295 aa). The interval 88-122 is disordered; sequence RAGAVGGRPGGCSEAGRPSPGRSGESGEGPRTEGL. S106 carries the post-translational modification Phosphoserine.

Belongs to the aspartyl/asparaginyl beta-hydroxylase family.

The protein localises to the membrane. In Bos taurus (Bovine), this protein is Aspartate beta-hydroxylase domain-containing protein 1 (ASPHD1).